The following is a 273-amino-acid chain: Phosphate import ATP-binding protein PstB (273 aa).

Residues 1–20 form a disordered region; the sequence is MTTVSTAAASGPAVPPPRID. The ABC transporter domain maps to 27–268; that stretch reads VAARNLNFYY…PSDRRTQDYI (242 aa). 59–66 is a binding site for ATP; the sequence is GPSGCGKS.

It belongs to the ABC transporter superfamily. Phosphate importer (TC 3.A.1.7) family. In terms of assembly, the complex is composed of two ATP-binding proteins (PstB), two transmembrane proteins (PstC and PstA) and a solute-binding protein (PstS).

The protein resides in the cell inner membrane. The enzyme catalyses phosphate(out) + ATP + H2O = ADP + 2 phosphate(in) + H(+). In terms of biological role, part of the ABC transporter complex PstSACB involved in phosphate import. Responsible for energy coupling to the transport system. The chain is Phosphate import ATP-binding protein PstB from Nitrobacter winogradskyi (strain ATCC 25391 / DSM 10237 / CIP 104748 / NCIMB 11846 / Nb-255).